A 194-amino-acid polypeptide reads, in one-letter code: MITKDPIDLFNIWYQEVLKNYSKDPTAMVLATCSKDLKPSARVVLLKQHSDEGFVFFTNMNSRKGKEISENPFVSLVFDWRQISKQVRIEGKIETLSPEDSDRYYATRSRGSQISACCSKQSNILEDKQEFITNVQKMTKEFMGKPVPRPSYWMGLRVVPMLIEFWQEGVDRIHTRYQYTRTDKHGWSIVELYP.

Residues 42-47, 57-58, arginine 63, lysine 64, and glutamine 86 contribute to the FMN site; these read RVVLLK and FT. A substrate-binding site is contributed by lysine 47. Residues tyrosine 104, arginine 108, and serine 112 each contribute to the substrate site. FMN contacts are provided by residues 121–122 and tryptophan 166; that span reads QS. Residue 172 to 174 coordinates substrate; that stretch reads RIH. Arginine 176 provides a ligand contact to FMN.

Belongs to the pyridoxamine 5'-phosphate oxidase family. Homodimer. FMN is required as a cofactor.

The catalysed reaction is pyridoxamine 5'-phosphate + O2 + H2O = pyridoxal 5'-phosphate + H2O2 + NH4(+). It catalyses the reaction pyridoxine 5'-phosphate + O2 = pyridoxal 5'-phosphate + H2O2. It participates in cofactor metabolism; pyridoxal 5'-phosphate salvage; pyridoxal 5'-phosphate from pyridoxamine 5'-phosphate: step 1/1. The protein operates within cofactor metabolism; pyridoxal 5'-phosphate salvage; pyridoxal 5'-phosphate from pyridoxine 5'-phosphate: step 1/1. Functionally, catalyzes the oxidation of either pyridoxine 5'-phosphate (PNP) or pyridoxamine 5'-phosphate (PMP) into pyridoxal 5'-phosphate (PLP). This Ehrlichia ruminantium (strain Welgevonden) protein is Pyridoxine/pyridoxamine 5'-phosphate oxidase.